Consider the following 142-residue polypeptide: Large ribosomal subunit protein uL13 (142 aa).

It belongs to the universal ribosomal protein uL13 family. Part of the 50S ribosomal subunit.

Functionally, this protein is one of the early assembly proteins of the 50S ribosomal subunit, although it is not seen to bind rRNA by itself. It is important during the early stages of 50S assembly. In Treponema denticola (strain ATCC 35405 / DSM 14222 / CIP 103919 / JCM 8153 / KCTC 15104), this protein is Large ribosomal subunit protein uL13.